The primary structure comprises 426 residues: Glutamate-1-semialdehyde 2,1-aminomutase (426 aa).

Lys-265 is modified (N6-(pyridoxal phosphate)lysine).

Belongs to the class-III pyridoxal-phosphate-dependent aminotransferase family. HemL subfamily. In terms of assembly, homodimer. Requires pyridoxal 5'-phosphate as cofactor.

The protein localises to the cytoplasm. The catalysed reaction is (S)-4-amino-5-oxopentanoate = 5-aminolevulinate. It participates in porphyrin-containing compound metabolism; protoporphyrin-IX biosynthesis; 5-aminolevulinate from L-glutamyl-tRNA(Glu): step 2/2. The chain is Glutamate-1-semialdehyde 2,1-aminomutase from Yersinia enterocolitica serotype O:8 / biotype 1B (strain NCTC 13174 / 8081).